The following is a 242-amino-acid chain: NAD-dependent protein deacylase 1 (242 aa).

One can recognise a Deacetylase sirtuin-type domain in the interval 1 to 242; it reads MDFKILKEKL…FAMKFEEKEG (242 aa). An NAD(+)-binding site is contributed by 21-40; the sequence is GAGISKESGIPTFRGEDGLW. Residues tyrosine 65 and arginine 68 each coordinate substrate. 99–102 contributes to the NAD(+) binding site; it reads QNVD. Histidine 117 (proton acceptor) is an active-site residue. Residues cysteine 125, cysteine 128, cysteine 146, and cysteine 149 each contribute to the Zn(2+) site. Residues 186-188 and glutamate 241 contribute to the NAD(+) site; that span reads GTS.

Belongs to the sirtuin family. Class III subfamily. Requires Zn(2+) as cofactor.

The protein resides in the cytoplasm. The catalysed reaction is N(6)-acetyl-L-lysyl-[protein] + NAD(+) + H2O = 2''-O-acetyl-ADP-D-ribose + nicotinamide + L-lysyl-[protein]. It catalyses the reaction N(6)-succinyl-L-lysyl-[protein] + NAD(+) + H2O = 2''-O-succinyl-ADP-D-ribose + nicotinamide + L-lysyl-[protein]. Functionally, NAD-dependent lysine deacetylase and desuccinylase that specifically removes acetyl and succinyl groups on target proteins. Modulates the activities of several proteins which are inactive in their acylated form. The protein is NAD-dependent protein deacylase 1 of Caldanaerobacter subterraneus subsp. tengcongensis (strain DSM 15242 / JCM 11007 / NBRC 100824 / MB4) (Thermoanaerobacter tengcongensis).